Here is a 213-residue protein sequence, read N- to C-terminus: ATP-dependent dethiobiotin synthetase BioD 2 (213 aa).

13–18 is an ATP binding site; that stretch reads DIGKTI. Residue Thr17 participates in Mg(2+) binding. Residue Lys38 is part of the active site. A substrate-binding site is contributed by Thr42. Residues Asp50 and 115–118 contribute to the ATP site; that span reads EGAG. Residues Asp50 and Glu115 each coordinate Mg(2+).

This sequence belongs to the dethiobiotin synthetase family. In terms of assembly, homodimer. Mg(2+) is required as a cofactor.

It is found in the cytoplasm. It carries out the reaction (7R,8S)-7,8-diammoniononanoate + CO2 + ATP = (4R,5S)-dethiobiotin + ADP + phosphate + 3 H(+). Its pathway is cofactor biosynthesis; biotin biosynthesis; biotin from 7,8-diaminononanoate: step 1/2. Catalyzes a mechanistically unusual reaction, the ATP-dependent insertion of CO2 between the N7 and N8 nitrogen atoms of 7,8-diaminopelargonic acid (DAPA, also called 7,8-diammoniononanoate) to form a ureido ring. The protein is ATP-dependent dethiobiotin synthetase BioD 2 of Pasteurella multocida (strain Pm70).